We begin with the raw amino-acid sequence, 636 residues long: Chaperone protein DnaK (636 aa).

Residue Thr203 is modified to Phosphothreonine; by autocatalysis. Residues 602-636 (VYGKQQEGAPAQEEPSAEGKKADDEGTVEGEFREV) form a disordered region. A compositionally biased stretch (basic and acidic residues) spans 618-636 (AEGKKADDEGTVEGEFREV).

Belongs to the heat shock protein 70 family.

In terms of biological role, acts as a chaperone. This is Chaperone protein DnaK from Dehalococcoides mccartyi (strain CBDB1).